The following is a 517-amino-acid chain: DNA-directed RNA polymerase subunit alpha (517 aa).

It belongs to the RNA polymerase alpha chain family. As to quaternary structure, in plastids the minimal PEP RNA polymerase catalytic core is composed of four subunits: alpha, beta, beta', and beta''. When a (nuclear-encoded) sigma factor is associated with the core the holoenzyme is formed, which can initiate transcription.

The protein localises to the plastid. The protein resides in the chloroplast. It carries out the reaction RNA(n) + a ribonucleoside 5'-triphosphate = RNA(n+1) + diphosphate. Functionally, DNA-dependent RNA polymerase catalyzes the transcription of DNA into RNA using the four ribonucleoside triphosphates as substrates. The chain is DNA-directed RNA polymerase subunit alpha (rpoA) from Stigeoclonium helveticum (Green alga).